The sequence spans 437 residues: Cytochrome b (437 aa).

Residues 45–65 (WIWGIVLAFTLVLQIVTGIVL) traverse the membrane as a helical segment. Positions 97 and 111 each coordinate heme b. The next 9 helical transmembrane spans lie at 100–120 (GASLFFLAVYIHIFRGLYYGS), 129–149 (WIVGMVIYLLMMGTAFMGYVL), 156–176 (FWGATVITGLFGAIPGIGPSI), 194–214 (FFSLHYLLPFVIAALVAIHIW), 248–268 (FVIKDLFALALVLLGFFAVVA), 298–318 (FLPFYAILRAFAADVWVVILV), 330–350 (FFGVIAMFGAIAVMALAPWLD), 365–385 (MWFWFLVLDFVVLTWVGAMPT), and 391–411 (WISLIASTYWFAYFLVILPLL). 2 residues coordinate heme b: His198 and His212.

It belongs to the cytochrome b family. As to quaternary structure, the main subunits of complex b-c1 are: cytochrome b, cytochrome c1 and the Rieske protein. Requires heme b as cofactor.

The protein resides in the cell membrane. Component of the ubiquinol-cytochrome c reductase complex (complex III or cytochrome b-c1 complex), which is a respiratory chain that generates an electrochemical potential coupled to ATP synthesis. This Rhodobacter capsulatus (Rhodopseudomonas capsulata) protein is Cytochrome b (petB).